The chain runs to 212 residues: Octanoyltransferase (212 aa).

Positions 31–209 constitute a BPL/LPL catalytic domain; sequence AETQDEIWLV…HFANLLGYNI (179 aa). Substrate contacts are provided by residues 70 to 77, 138 to 140, and 151 to 153; these read RGGQITYH, SLG, and GLA. The Acyl-thioester intermediate role is filled by Cys169.

This sequence belongs to the LipB family.

It localises to the cytoplasm. The catalysed reaction is octanoyl-[ACP] + L-lysyl-[protein] = N(6)-octanoyl-L-lysyl-[protein] + holo-[ACP] + H(+). The protein operates within protein modification; protein lipoylation via endogenous pathway; protein N(6)-(lipoyl)lysine from octanoyl-[acyl-carrier-protein]: step 1/2. In terms of biological role, catalyzes the transfer of endogenously produced octanoic acid from octanoyl-acyl-carrier-protein onto the lipoyl domains of lipoate-dependent enzymes. Lipoyl-ACP can also act as a substrate although octanoyl-ACP is likely to be the physiological substrate. This Haemophilus influenzae (strain ATCC 51907 / DSM 11121 / KW20 / Rd) protein is Octanoyltransferase.